Consider the following 296-residue polypeptide: Diaminopimelate epimerase (296 aa).

Substrate contacts are provided by Asn-17, Gln-49, and Asn-69. Residue Cys-78 is the Proton donor of the active site. Substrate is bound by residues 79–80, Asn-171, Asn-205, and 223–224; these read GN and ER. Cys-232 acts as the Proton acceptor in catalysis. Substrate is bound at residue 233-234; sequence GT.

This sequence belongs to the diaminopimelate epimerase family. In terms of assembly, homodimer.

It is found in the cytoplasm. It catalyses the reaction (2S,6S)-2,6-diaminopimelate = meso-2,6-diaminopimelate. Its pathway is amino-acid biosynthesis; L-lysine biosynthesis via DAP pathway; DL-2,6-diaminopimelate from LL-2,6-diaminopimelate: step 1/1. In terms of biological role, catalyzes the stereoinversion of LL-2,6-diaminopimelate (L,L-DAP) to meso-diaminopimelate (meso-DAP), a precursor of L-lysine and an essential component of the bacterial peptidoglycan. This Methylorubrum extorquens (strain CM4 / NCIMB 13688) (Methylobacterium extorquens) protein is Diaminopimelate epimerase.